An 84-amino-acid polypeptide reads, in one-letter code: RNA-binding protein Hfq (84 aa).

The Sm domain maps to 10–70 (DLFLNVLRRD…ISTIMPFRPV (61 aa)).

Belongs to the Hfq family. Homohexamer.

Functionally, RNA chaperone that binds small regulatory RNA (sRNAs) and mRNAs to facilitate mRNA translational regulation in response to envelope stress, environmental stress and changes in metabolite concentrations. Also binds with high specificity to tRNAs. In Moorella thermoacetica (strain ATCC 39073 / JCM 9320), this protein is RNA-binding protein Hfq.